The chain runs to 329 residues: DNA-directed RNA polymerase subunit alpha (329 aa).

The tract at residues 1 to 235 is alpha N-terminal domain (alpha-NTD); that stretch reads MQGSVTEFLK…EQLEAFVDLR (235 aa). The segment at 249 to 329 is alpha C-terminal domain (alpha-CTD); the sequence is FDPILLRPVD…NWPPASIADE (81 aa).

It belongs to the RNA polymerase alpha chain family. Homodimer. The RNAP catalytic core consists of 2 alpha, 1 beta, 1 beta' and 1 omega subunit. When a sigma factor is associated with the core the holoenzyme is formed, which can initiate transcription.

It carries out the reaction RNA(n) + a ribonucleoside 5'-triphosphate = RNA(n+1) + diphosphate. Its function is as follows. DNA-dependent RNA polymerase catalyzes the transcription of DNA into RNA using the four ribonucleoside triphosphates as substrates. This chain is DNA-directed RNA polymerase subunit alpha, found in Cronobacter sakazakii (strain ATCC BAA-894) (Enterobacter sakazakii).